The chain runs to 317 residues: Ferrochelatase (317 aa).

The Fe cation site is built by His191 and Glu271.

It belongs to the ferrochelatase family.

The protein localises to the cytoplasm. The catalysed reaction is heme b + 2 H(+) = protoporphyrin IX + Fe(2+). It participates in porphyrin-containing compound metabolism; protoheme biosynthesis; protoheme from protoporphyrin-IX: step 1/1. Its function is as follows. Catalyzes the ferrous insertion into protoporphyrin IX. This is Ferrochelatase from Thermus thermophilus (strain ATCC BAA-163 / DSM 7039 / HB27).